The following is a 278-amino-acid chain: 4-hydroxy-tetrahydrodipicolinate reductase (278 aa).

NAD(+) contacts are provided by residues 13 to 18 (GAAGKM) and 111 to 113 (GTT). His-167 functions as the Proton donor/acceptor in the catalytic mechanism. Residue His-168 coordinates (S)-2,3,4,5-tetrahydrodipicolinate. The active-site Proton donor is Lys-171. (S)-2,3,4,5-tetrahydrodipicolinate is bound at residue 177-178 (GT).

The protein belongs to the DapB family.

The protein resides in the cytoplasm. It catalyses the reaction (S)-2,3,4,5-tetrahydrodipicolinate + NAD(+) + H2O = (2S,4S)-4-hydroxy-2,3,4,5-tetrahydrodipicolinate + NADH + H(+). It carries out the reaction (S)-2,3,4,5-tetrahydrodipicolinate + NADP(+) + H2O = (2S,4S)-4-hydroxy-2,3,4,5-tetrahydrodipicolinate + NADPH + H(+). The protein operates within amino-acid biosynthesis; L-lysine biosynthesis via DAP pathway; (S)-tetrahydrodipicolinate from L-aspartate: step 4/4. Its function is as follows. Catalyzes the conversion of 4-hydroxy-tetrahydrodipicolinate (HTPA) to tetrahydrodipicolinate. The polypeptide is 4-hydroxy-tetrahydrodipicolinate reductase (Trichormus variabilis (strain ATCC 29413 / PCC 7937) (Anabaena variabilis)).